The chain runs to 194 residues: Lipoprotein signal peptidase (194 aa).

Transmembrane regions (helical) follow at residues 75–95 and 97–117; these read TIFLITNMIIVCYLYYLMICS and TIGSFAGYSFVIGGAIGNLID. Active-site residues include aspartate 126 and aspartate 144. The chain crosses the membrane as a helical span at residues 135–155; the sequence is YSFPVFNLADCFITLGVIILM.

The protein belongs to the peptidase A8 family.

Its subcellular location is the cell inner membrane. The enzyme catalyses Release of signal peptides from bacterial membrane prolipoproteins. Hydrolyzes -Xaa-Yaa-Zaa-|-(S,diacylglyceryl)Cys-, in which Xaa is hydrophobic (preferably Leu), and Yaa (Ala or Ser) and Zaa (Gly or Ala) have small, neutral side chains.. It participates in protein modification; lipoprotein biosynthesis (signal peptide cleavage). This protein specifically catalyzes the removal of signal peptides from prolipoproteins. The protein is Lipoprotein signal peptidase of Rickettsia prowazekii (strain Madrid E).